We begin with the raw amino-acid sequence, 412 residues long: Phospholipase A1-IIdelta (412 aa).

Ala-2 bears the N-acetylalanine mark. Ser-238 serves as the catalytic Acyl-ester intermediate. Active-site charge relay system residues include Ser-238, Asp-297, and His-336.

Belongs to the AB hydrolase superfamily. Lipase family. Expressed in leaves, stems, flowers and siliques, and, at low levels, in seeds and roots (at protein level).

It is found in the cytoplasm. In terms of biological role, acylhydrolase that catalyzes the hydrolysis of phosphatidylcholine (PC) at the sn-1 position. High activity toward PC, medium activity toward monogalactosyldiacylglycerol (MGDG) and low activity toward triacylglycerol (TAG). Confers sensitivity to UV-B radiation probably by deesterifying membrane phospholipids. The sequence is that of Phospholipase A1-IIdelta from Arabidopsis thaliana (Mouse-ear cress).